The chain runs to 254 residues: Pimeloyl-[acyl-carrier protein] methyl ester esterase (254 aa).

An AB hydrolase-1 domain is found at 16-241 (LVLLHGWGMN…QSSHAPFMTE (226 aa)). Residues Trp22, 82–83 (SL), and 143–147 (FMALQ) contribute to the substrate site. The active-site Nucleophile is the Ser82. Active-site residues include Asp207 and His235. A substrate-binding site is contributed by His235.

This sequence belongs to the AB hydrolase superfamily. Carboxylesterase BioH family. In terms of assembly, monomer.

The protein resides in the cytoplasm. The enzyme catalyses 6-carboxyhexanoyl-[ACP] methyl ester + H2O = 6-carboxyhexanoyl-[ACP] + methanol + H(+). It participates in cofactor biosynthesis; biotin biosynthesis. The physiological role of BioH is to remove the methyl group introduced by BioC when the pimeloyl moiety is complete. It allows to synthesize pimeloyl-ACP via the fatty acid synthetic pathway through the hydrolysis of the ester bonds of pimeloyl-ACP esters. The protein is Pimeloyl-[acyl-carrier protein] methyl ester esterase of Vibrio campbellii (strain ATCC BAA-1116).